The chain runs to 307 residues: Fructokinase (307 aa).

The protein belongs to the carbohydrate kinase PfkB family.

It carries out the reaction D-fructose + ATP = D-fructose 6-phosphate + ADP + H(+). The sequence is that of Fructokinase (scrK) from Salmonella typhimurium.